Consider the following 554-residue polypeptide: MTTSTPDIQPAVQHTAQVAIAGAGPVGLMMANYLGQMGISVLLVEKLDTLIDYPRAIGIDDESLRAMQAVGLVNDVLPHTTPWHAMRFLTPKGRCFADIQPMTDEFGWSRRNAFIQPQVDAVMYHGLQRFPQVRCLFSREVEAFSQNGDGVTLNLKGPDGERETVRADWLVACDGGASFIRRTLNVPFEGKTAPNQWIVIDIANDPLATPHVYLCCDPVRPYVSAALPHGVRRFEFMVMPGETEAQLSEPHNMRRLLSKVLPDPDRVELIRQRVYTHNARLAERFRIDRVLLAGDAAHIMPVWQGQGYNSGMRDAFNLAWKLALVVNGKAGEALLDSYQQERRDHAKAMIDLSVTAGHVLAPPKRWQGAVRDGLSWLLNYLPPVKRYFLEMRFKPMPQYREGALLIDAAGKTSPVGKMFIQPQVTLESGESVLLDEVIGANFAIIGWGCNPQWGLDAGQIARWRAIGVRFIQVVPAVQIHREQDNAPGTLRVGDTQNRLKSWFAQHNTAIAVVRPDRFVAALAIPQTLGAQLTALAEKMTLATGDTARTEEKVA.

Residues 17-46 and 285-295 contribute to the FAD site; these read QVAIAGAGPVGLMMANYLGQMGISVLLVEK and FRIDRVLLAGD.

It belongs to the PheA/TfdB FAD monooxygenase family. The cofactor is FAD.

It carries out the reaction 3-(3-hydroxyphenyl)propanoate + NADH + O2 + H(+) = 3-(2,3-dihydroxyphenyl)propanoate + NAD(+) + H2O. It catalyses the reaction (2E)-3-(3-hydroxyphenyl)prop-2-enoate + NADH + O2 + H(+) = (2E)-3-(2,3-dihydroxyphenyl)prop-2-enoate + NAD(+) + H2O. It functions in the pathway aromatic compound metabolism; 3-phenylpropanoate degradation. Functionally, catalyzes the insertion of one atom of molecular oxygen into position 2 of the phenyl ring of 3-(3-hydroxyphenyl)propionate (3-HPP) and hydroxycinnamic acid (3HCI). This Klebsiella pneumoniae (strain 342) protein is 3-(3-hydroxy-phenyl)propionate/3-hydroxycinnamic acid hydroxylase.